A 360-amino-acid chain; its full sequence is DNA integrity scanning protein DisA (360 aa).

A DAC domain is found at 11–149 (ELDLSSILQF…ENMKYTLKDI (139 aa)). ATP is bound by residues glycine 78, leucine 96, and 109–113 (MRHRT).

The protein belongs to the DisA family. Homooligomer. Interacts with RadA. Requires Mg(2+) as cofactor.

The protein resides in the cytoplasm. The catalysed reaction is 2 ATP = 3',3'-c-di-AMP + 2 diphosphate. Diadenylate cyclase (DAC) activity is inhibited 2-fold by Holliday junction (HJ) DNA, further addition of RecG inhibits DAC activity 11-fold; RecG may relocate DisA from the HJ. DAC is inhibited by the interaction with RadA. Diadenylate cyclase activity is not affected by ssDNA or dsDNA, but three- and four-way junctions strongly inhibit the activity of DisA, suggesting the enzyme is regulated by branched nucleic acids. Its function is as follows. Participates in a DNA-damage check-point that is active prior to asymmetric division when DNA is damaged. Forms globular foci that rapidly scan along the chromosomes during sporulation, searching for lesions. Its ability to scan through the chromosome rapidly is due to its non-specific DNA-binding. When a lesion is present, DisA pauses at the lesion site. This triggers a cellular response that culminates in a temporary block in sporulation initiation. It is required, at least partially, to inhibit the activity of the transcription factor spo0A, which controls, among others, early sporulation genes. In B.subtilis c-di-AMP is a second messenger that mediates growth, DNA repair and cell wall homeostasis; it is toxic when present in excess. Limits the replication fork reggression activity of RecG; DisA inhibits the ATPase activity of RecG. By limiting RecG-mediated fork regression, DisA provides time for removal of potentially lethal DNA lesions. One of 3 paralogous diadenylate cyclases (DAC) in this bacteria. Has diadenylate cyclase activity, catalyzing the condensation of 2 ATP molecules into cyclic di-AMP (c-di-AMP). c-di-AMP acts as a signaling molecule that couples DNA integrity with progression of sporulation. The rise in c-di-AMP level generated by DisA while scanning the chromosome operates as a positive signal that advances sporulation; upon encountering a lesion, the DisA focus arrests at the damaged site and halts c-di-AMP synthesis. Does not convert GTP to c-di-GMP. This is DNA integrity scanning protein DisA from Bacillus subtilis (strain 168).